A 153-amino-acid chain; its full sequence is MNVGVAHSEVNPNTRVMNSRGIWLAYIILVGLLHVVLLSIPFFSIPVVWTLTNVIHNLVMYVFLHTVKGTPFETPDQGKARLLTHWEQMDYGLQFTSSRKFLSISPIVLYLLASFYTKYDAAHFLINTASLLSVLLPKLPQFHGVRLFGINKY.

Residues 1-21 (MNVGVAHSEVNPNTRVMNSRG) are Cytoplasmic-facing. The next 2 helical transmembrane spans lie at 22 to 42 (IWLA…SIPF) and 43 to 63 (FSIP…MYVF). At 64–105 (LHTVKGTPFETPDQGKARLLTHWEQMDYGLQFTSSRKFLSIS) the chain is on the cytoplasmic side. A helical membrane pass occupies residues 106-126 (PIVLYLLASFYTKYDAAHFLI). Over 127–153 (NTASLLSVLLPKLPQFHGVRLFGINKY) the chain is Extracellular.

Belongs to the ORM family. In terms of assembly, ceramide-sensitive subunit of the serine palmitoyltransferase (SPT) complex, which is also composed of SPTLC1, SPTLC2/3 and SPTSSA/B.

Its subcellular location is the endoplasmic reticulum membrane. In terms of biological role, plays an essential role in the homeostatic regulation of sphingolipid de novo biosynthesis by modulating the activity of the serine palmitoyltransferase (SPT) in response to ceramide levels. When complexed to SPT, the binding of ceramides to its N-terminus stabilizes a conformation that block SPT substrate entry, hence preventing SPT catalytic activity. Through this mechanism, maintains ceramide levels at sufficient concentrations for the production of complex sphingolipids, but which prevents the accumulation of ceramides to levels that trigger apoptosis. The polypeptide is ORM1-like protein 2 (ORMDL2) (Bos taurus (Bovine)).